A 495-amino-acid polypeptide reads, in one-letter code: UDP-N-acetylmuramoyl-L-alanyl-D-glutamate--2,6-diaminopimelate ligase (495 aa).

UDP-N-acetyl-alpha-D-muramoyl-L-alanyl-D-glutamate contacts are provided by residues leucine 27, serine 29, and histidine 44–alanine 46. Glycine 116–threonine 122 contributes to the ATP binding site. Residues asparagine 157, threonine 158–threonine 159, serine 185, glutamine 191, and arginine 193 contribute to the UDP-N-acetyl-alpha-D-muramoyl-L-alanyl-D-glutamate site. Lysine 225 is modified (N6-carboxylysine). Meso-2,6-diaminopimelate-binding positions include arginine 390, aspartate 414–arginine 417, glycine 465, and glutamate 469. Positions aspartate 414–arginine 417 match the Meso-diaminopimelate recognition motif motif.

It belongs to the MurCDEF family. MurE subfamily. The cofactor is Mg(2+). Post-translationally, carboxylation is probably crucial for Mg(2+) binding and, consequently, for the gamma-phosphate positioning of ATP.

It localises to the cytoplasm. The catalysed reaction is UDP-N-acetyl-alpha-D-muramoyl-L-alanyl-D-glutamate + meso-2,6-diaminopimelate + ATP = UDP-N-acetyl-alpha-D-muramoyl-L-alanyl-gamma-D-glutamyl-meso-2,6-diaminopimelate + ADP + phosphate + H(+). It participates in cell wall biogenesis; peptidoglycan biosynthesis. Catalyzes the addition of meso-diaminopimelic acid to the nucleotide precursor UDP-N-acetylmuramoyl-L-alanyl-D-glutamate (UMAG) in the biosynthesis of bacterial cell-wall peptidoglycan. This Enterobacter sp. (strain 638) protein is UDP-N-acetylmuramoyl-L-alanyl-D-glutamate--2,6-diaminopimelate ligase.